The sequence spans 1009 residues: Serine/threonine-protein phosphatase BSL2 homolog (1009 aa).

The disordered stretch occupies residues 1–48; it reads MDVDSRMTTESDSDSDAAAQGGGGGGFGSETSSASPSAPGTPTAMGAG. Residues 29–45 show a composition bias toward low complexity; the sequence is SETSSASPSAPGTPTAM. Kelch repeat units follow at residues 136-182, 240-288, 293-344, 349-396, and 417-463; these read SSAG…VATA, FLLT…TASA, LLLL…FVNA, SGGA…DAAG, and MIYV…IQAG. Residues 549-572 form a disordered region; the sequence is QVNGEAEHSPDREQSPDATPSVKQ. The segment covering 553-563 has biased composition (basic and acidic residues); sequence EAEHSPDREQS. D711, H713, D745, and N777 together coordinate Mn(2+). Residue H778 is the Proton donor of the active site. Mn(2+)-binding residues include H830 and H909. Positions 984-1009 are disordered; it reads NANRPPTPTRGRPQAANNDRGSLAWI.

Belongs to the PPP phosphatase family. BSU subfamily. The cofactor is Mn(2+).

It is found in the nucleus. The enzyme catalyses O-phospho-L-seryl-[protein] + H2O = L-seryl-[protein] + phosphate. The catalysed reaction is O-phospho-L-threonyl-[protein] + H2O = L-threonyl-[protein] + phosphate. The chain is Serine/threonine-protein phosphatase BSL2 homolog (BSL2) from Oryza sativa subsp. japonica (Rice).